The primary structure comprises 521 residues: Maturase K (521 aa).

It belongs to the intron maturase 2 family. MatK subfamily.

The protein localises to the plastid. It localises to the chloroplast. Its function is as follows. Usually encoded in the trnK tRNA gene intron. Probably assists in splicing its own and other chloroplast group II introns. This Trillium catesbaei (Catesby's trillium) protein is Maturase K.